Here is a 201-residue protein sequence, read N- to C-terminus: Adenylyl-sulfate kinase (201 aa).

Position 35-42 (35-42) interacts with ATP; it reads GLSGSGKS. Serine 109 serves as the catalytic Phosphoserine intermediate.

It belongs to the APS kinase family.

The catalysed reaction is adenosine 5'-phosphosulfate + ATP = 3'-phosphoadenylyl sulfate + ADP + H(+). It functions in the pathway sulfur metabolism; hydrogen sulfide biosynthesis; sulfite from sulfate: step 2/3. Its function is as follows. Catalyzes the synthesis of activated sulfate. This chain is Adenylyl-sulfate kinase, found in Escherichia coli O139:H28 (strain E24377A / ETEC).